A 589-amino-acid chain; its full sequence is L-fucose isomerase (589 aa).

Residues glutamate 340 and aspartate 364 each act as proton acceptor in the active site. Positions 340, 364, and 527 each coordinate Mn(2+).

Belongs to the L-fucose isomerase family. It depends on Mn(2+) as a cofactor.

Its subcellular location is the cytoplasm. It catalyses the reaction L-fucose = L-fuculose. It functions in the pathway carbohydrate degradation; L-fucose degradation; L-lactaldehyde and glycerone phosphate from L-fucose: step 1/3. In terms of biological role, converts the aldose L-fucose into the corresponding ketose L-fuculose. This is L-fucose isomerase from Haemophilus influenzae (strain ATCC 51907 / DSM 11121 / KW20 / Rd).